A 186-amino-acid chain; its full sequence is Probable peptidyl-tRNA hydrolase 2 (186 aa).

Belongs to the PTH2 family.

It catalyses the reaction an N-acyl-L-alpha-aminoacyl-tRNA + H2O = an N-acyl-L-amino acid + a tRNA + H(+). Functionally, the natural substrate for this enzyme may be peptidyl-tRNAs which drop off the ribosome during protein synthesis. The polypeptide is Probable peptidyl-tRNA hydrolase 2 (Drosophila melanogaster (Fruit fly)).